Here is a 49-residue protein sequence, read N- to C-terminus: Large ribosomal subunit protein bL33 (49 aa).

Belongs to the bacterial ribosomal protein bL33 family.

The polypeptide is Large ribosomal subunit protein bL33 (Desulfitobacterium hafniense (strain Y51)).